Reading from the N-terminus, the 152-residue chain is Ribosome maturation factor RimP (152 aa).

Belongs to the RimP family.

It localises to the cytoplasm. Functionally, required for maturation of 30S ribosomal subunits. This is Ribosome maturation factor RimP from Desulfitobacterium hafniense (strain Y51).